Consider the following 415-residue polypeptide: Adenosylhomocysteinase (415 aa).

Residues Thr53, Asp124, and Glu147 each contribute to the substrate site. 148 to 150 is a binding site for NAD(+); that stretch reads TTT. Lys177 and Asp181 together coordinate substrate. NAD(+)-binding positions include Asn182, 211-216, Glu234, Asn269, 290-292, and Asn337; these read GYGWVG and SGH.

This sequence belongs to the adenosylhomocysteinase family. NAD(+) serves as cofactor.

The protein localises to the cytoplasm. It carries out the reaction S-adenosyl-L-homocysteine + H2O = L-homocysteine + adenosine. The protein operates within amino-acid biosynthesis; L-homocysteine biosynthesis; L-homocysteine from S-adenosyl-L-homocysteine: step 1/1. Its function is as follows. May play a key role in the regulation of the intracellular concentration of adenosylhomocysteine. In Sulfolobus acidocaldarius (strain ATCC 33909 / DSM 639 / JCM 8929 / NBRC 15157 / NCIMB 11770), this protein is Adenosylhomocysteinase.